We begin with the raw amino-acid sequence, 160 residues long: SsrA-binding protein (160 aa).

The interval 1–23 is disordered; the sequence is MARKKKQDKGQGPKTIAQNRRAR.

The protein belongs to the SmpB family.

The protein resides in the cytoplasm. Required for rescue of stalled ribosomes mediated by trans-translation. Binds to transfer-messenger RNA (tmRNA), required for stable association of tmRNA with ribosomes. tmRNA and SmpB together mimic tRNA shape, replacing the anticodon stem-loop with SmpB. tmRNA is encoded by the ssrA gene; the 2 termini fold to resemble tRNA(Ala) and it encodes a 'tag peptide', a short internal open reading frame. During trans-translation Ala-aminoacylated tmRNA acts like a tRNA, entering the A-site of stalled ribosomes, displacing the stalled mRNA. The ribosome then switches to translate the ORF on the tmRNA; the nascent peptide is terminated with the 'tag peptide' encoded by the tmRNA and targeted for degradation. The ribosome is freed to recommence translation, which seems to be the essential function of trans-translation. This Thermobifida fusca (strain YX) protein is SsrA-binding protein.